We begin with the raw amino-acid sequence, 557 residues long: Formate--tetrahydrofolate ligase (557 aa).

Residue 66–73 coordinates ATP; the sequence is TPAGEGKS.

It belongs to the formate--tetrahydrofolate ligase family.

It catalyses the reaction (6S)-5,6,7,8-tetrahydrofolate + formate + ATP = (6R)-10-formyltetrahydrofolate + ADP + phosphate. It participates in one-carbon metabolism; tetrahydrofolate interconversion. The chain is Formate--tetrahydrofolate ligase from Clostridium botulinum (strain Kyoto / Type A2).